The following is a 452-amino-acid chain: Protein EARLY-RESPONSIVE TO DEHYDRATION 7, chloroplastic (452 aa).

A compositionally biased stretch (polar residues) spans 1–18 (MESSGDKQTSSLYPTVDT). The N-terminal 28 residues, 1–28 (MESSGDKQTSSLYPTVDTSNPEAPINPS), are a transit peptide targeting the chloroplast. The segment at 1–37 (MESSGDKQTSSLYPTVDTSNPEAPINPSSSSSTNNLY) is disordered. Residues 19-37 (SNPEAPINPSSSSSTNNLY) are compositionally biased toward low complexity. One can recognise a Senescence domain in the interval 258–426 (IATGSGHLIK…AWVAFKIRKA (169 aa)).

Its subcellular location is the plastid. The protein localises to the chloroplast. The protein is Protein EARLY-RESPONSIVE TO DEHYDRATION 7, chloroplastic of Arabidopsis thaliana (Mouse-ear cress).